A 557-amino-acid chain; its full sequence is Hydroxylamine reductase (557 aa).

[4Fe-4S] cluster-binding residues include Cys-3, Cys-6, Cys-19, and Cys-26. His-253, Glu-277, Cys-321, Cys-408, Cys-436, Cys-461, Glu-495, and Lys-497 together coordinate hybrid [4Fe-2O-2S] cluster. Position 408 is a cysteine persulfide (Cys-408).

The protein belongs to the HCP family. Requires [4Fe-4S] cluster as cofactor. The cofactor is hybrid [4Fe-2O-2S] cluster.

It localises to the cytoplasm. The catalysed reaction is A + NH4(+) + H2O = hydroxylamine + AH2 + H(+). In terms of biological role, catalyzes the reduction of hydroxylamine to form NH(3) and H(2)O. This Acidiphilium cryptum (strain JF-5) protein is Hydroxylamine reductase.